The primary structure comprises 345 residues: uncharacterized protein (345 aa).

This is an uncharacterized protein from Archaeoglobus fulgidus (strain ATCC 49558 / DSM 4304 / JCM 9628 / NBRC 100126 / VC-16).